The primary structure comprises 698 residues: Cytoplasmic polyadenylation element-binding protein 3 (698 aa).

The span at 1-11 shows a compositional bias: basic and acidic residues; sequence MQDDLLMDKSK. Disordered regions lie at residues 1–114 and 158–208; these read MQDD…WSTG and AQTQ…SAAA. Residues 13 to 28 show a composition bias toward low complexity; sequence QPQPQQQQRQQQQPQP. Polar residues predominate over residues 29 to 44; sequence ESSVSEAPSTPLSSET. Residues 87–96 are compositionally biased toward pro residues; sequence PQQPPPPQEP. Over residues 103 to 114 the composition is skewed to polar residues; it reads LSPSFGSTWSTG. The span at 165 to 185 shows a compositional bias: pro residues; that stretch reads QPPPPAPAPQPAQPAQPPQAQ. A compositionally biased stretch (low complexity) spans 186-208; the sequence is PPQQRRSPASPSQAPYAQRSAAA. 3 positions are modified to phosphoserine: Ser-192, Ser-195, and Ser-290. Position 308 is an asymmetric dimethylarginine (Arg-308). 2 consecutive RRM domains span residues 441 to 532 and 549 to 631; these read RKVF…PWNL and KTIF…PYVL.

It belongs to the RRM CPEB family. In terms of assembly, following synaptic activity, forms amyloid-like oligomers. Aggregation requires an intact actin cytoskeleton. Interacts with STAT5B; this inhibits STAT5B-mediated transcriptional activation. Interacts with E3 ubiquitin-protein ligase NEURL1; this leads to monoubiquitination and activation of CPEB3. Interacts with CAPN2; this leads to cleavage of CPEB3. Interacts (via C-terminal RNA-binding region) with TOB1; TOB1 also binds CNOT7/CAF1 and recruits it to CPEB3 to form a ternary complex. Interacts with SUMO-conjugating enzyme UBC9. Interacts with IPO5; the interaction is enhanced in a RAN-regulated manner following neuronal stimulation and mediates CPEB3 nuclear import. Interacts with exportin XPO1/CRM1. In terms of processing, activated by NEURL1-mediated monoubiquitination, resulting in the growth of new dendritic spines and increased levels of GRIA1 and GRIA2. NEURL1-mediated monoubiquitination facilitates synaptic plasticity and hippocampal-dependent memory storage. Post-translationally, under basal unstimulated conditions when CPEB3 is mainly unaggregated, sumoylated and acts as a translational repressor. Following neuronal stimulation, becomes desumoylated and aggregated which is required for the translation of mRNA targets and for dendritic filopodia formation. Following neuronal stimulation, cleaved by CAPN2 which abolishes its translational repressor activity, leading to translation of CPEB3 target mRNAs. In terms of processing, phosphorylation is enhanced by neuronal stimulation.

It localises to the cytoplasm. Its subcellular location is the nucleus. It is found in the synapse. The protein localises to the cell projection. The protein resides in the dendrite. It localises to the postsynaptic density. Sequence-specific RNA-binding protein which acts as a translational repressor in the basal unstimulated state but, following neuronal stimulation, acts as a translational activator. In contrast to CPEB1, does not bind to the cytoplasmic polyadenylation element (CPE), a uridine-rich sequence element within the mRNA 3'-UTR, but binds to a U-rich loop within a stem-loop structure. Required for the consolidation and maintenance of hippocampal-based long term memory. In the basal state, binds to the mRNA 3'-UTR of the glutamate receptors GRIA2/GLUR2 mRNA and negatively regulates their translation. Also represses the translation of DLG4, GRIN1, GRIN2A and GRIN2B. When activated, acts as a translational activator of GRIA1 and GRIA2. In the basal state, suppresses SUMO2 translation but activates it following neuronal stimulation. Binds to the 3'-UTR of TRPV1 mRNA and represses TRPV1 translation which is required to maintain normal thermoception. Binds actin mRNA, leading to actin translational repression in the basal state and to translational activation following neuronal stimulation. Negatively regulates target mRNA levels by binding to TOB1 which recruits CNOT7/CAF1 to a ternary complex and this leads to target mRNA deadenylation and decay. In addition to its role in translation, binds to and inhibits the transcriptional activation activity of STAT5B without affecting its dimerization or DNA-binding activity. This, in turn, represses transcription of the STAT5B target gene EGFR which has been shown to play a role in enhancing learning and memory performance. In contrast to CPEB1, CPEB2 and CPEB4, not required for cell cycle progression. The sequence is that of Cytoplasmic polyadenylation element-binding protein 3 (CPEB3) from Homo sapiens (Human).